The following is a 253-amino-acid chain: Phosphate import ATP-binding protein PstB (253 aa).

The ABC transporter domain occupies 7–248; that stretch reads IEVEDLNVYF…PRDKRTEDYI (242 aa). Position 39 to 46 (39 to 46) interacts with ATP; the sequence is GPSGCGKS.

It belongs to the ABC transporter superfamily. Phosphate importer (TC 3.A.1.7) family. In terms of assembly, the complex is composed of two ATP-binding proteins (PstB), two transmembrane proteins (PstC and PstA) and a solute-binding protein (PstS).

It localises to the cell membrane. It carries out the reaction phosphate(out) + ATP + H2O = ADP + 2 phosphate(in) + H(+). Functionally, part of the ABC transporter complex PstSACB involved in phosphate import. Responsible for energy coupling to the transport system. The protein is Phosphate import ATP-binding protein PstB of Methanothermobacter thermautotrophicus (strain ATCC 29096 / DSM 1053 / JCM 10044 / NBRC 100330 / Delta H) (Methanobacterium thermoautotrophicum).